We begin with the raw amino-acid sequence, 112 residues long: Cortistatin (112 aa).

The first 27 residues, 1-27, serve as a signal peptide directing secretion; the sequence is MGGCSTRGKRPSALSLLLLLLLSGIAA. The propeptide occupies 28–81; the sequence is SALPLESGPTGQDSVQDATGGRRTGLLTFLAWWHEWASQDSSSTAFEGGTPELS. The disordered stretch occupies residues 66–101; sequence QDSSSTAFEGGTPELSKRQERPPLQQPPHRDKKPCK. The cysteines at positions 100 and 111 are disulfide-linked.

It belongs to the somatostatin family. In terms of tissue distribution, interneurons in the cerebral cortex and hippocampus.

The protein resides in the secreted. Functionally, neuropeptide with neuronal depressant and sleep-modulating properties. The protein is Cortistatin (Cort) of Rattus norvegicus (Rat).